The primary structure comprises 576 residues: Low-affinity glucose transporter HXT4 (576 aa).

Residues 1–56 (MSEEAAYQEDTAVQNTPADALSPVESDSNSALSTPSNKAERDDMKDFDENHEESNN) are disordered. Over 1–66 (MSEEAAYQED…YVEIPKKPAS (66 aa)) the chain is Cytoplasmic. The segment covering 25 to 37 (ESDSNSALSTPSN) has biased composition (polar residues). The span at 38 to 54 (KAERDDMKDFDENHEES) shows a compositional bias: basic and acidic residues. A Glycyl lysine isopeptide (Lys-Gly) (interchain with G-Cter in ubiquitin) cross-link involves residue K45. Residues 67-87 (AYVTVSICCLMVAFGGFVFGW) traverse the membrane as a helical segment. The Extracellular portion of the chain corresponds to 88–122 (DTGTISGFVAQTDFIRRFGMKHHDGTYYLSKVRTG). Residues 123–143 (LIVSIFNIGCAIGGIILARLG) traverse the membrane as a helical segment. Topologically, residues 144 to 149 (DMYGRK) are cytoplasmic. The chain crosses the membrane as a helical span at residues 150–170 (MGLIVVVVIYIIGIIIQIASI). At 171–180 (NKWYQYFIGR) the chain is on the extracellular side. A helical transmembrane segment spans residues 181–201 (IISGLGVGGIAVLSPMLISEV). Residues 202–207 (SPKHIR) lie on the Cytoplasmic side of the membrane. The chain crosses the membrane as a helical span at residues 208–228 (GTLVSCYQLMITLGIFLGYCT). The Extracellular segment spans residues 229–242 (NYGTKTYTNSVQWR). A helical membrane pass occupies residues 243-263 (VPLGLGFAWALFMIGGMTFVP). The Cytoplasmic segment spans residues 264-346 (ESPRYLVEVG…IQSLQQLTGD (83 aa)). Residues 347–363 (NYFFYYGTTVFTAVGLE) form a helical membrane-spanning segment. Residues 364-369 (DSFETS) are Extracellular-facing. The chain crosses the membrane as a helical span at residues 370–387 (IVLGIVNFASTFVGIFLV). Topologically, residues 388–394 (ERYGRRR) are cytoplasmic. A helical transmembrane segment spans residues 395-415 (CLLWGAASMTACMVVFASVGV). Topologically, residues 416–437 (TRLWPNGKKNGSSKGAGNCMIV) are extracellular. A glycan (N-linked (GlcNAc...) asparagine) is linked at N425. Residues 438 to 458 (FTCFYLFCFATTWAPIPFVVN) form a helical membrane-spanning segment. Residues 459 to 475 (SETFPLRVKSKCMAIAQ) are Cytoplasmic-facing. Residues 476 to 496 (ACNWIWGFLIGFFTPFISGAI) traverse the membrane as a helical segment. Residue D497 is a topological domain, extracellular. Residues 498 to 518 (FYYGYVFMGCLVFSYFYVFFF) traverse the membrane as a helical segment. The Cytoplasmic portion of the chain corresponds to 519–576 (VPETKGLTLEEVNTLWEEGVLPWKSPSWVPPNKRGTDYNADDLMHDDQPFYKKMFGKK).

Belongs to the major facilitator superfamily. Sugar transporter (TC 2.A.1.1) family.

It is found in the cell membrane. With respect to regulation, xylose uptake is strongly inhibited by glucose. Low-affinity glucose transporter. Can also transport xylose. The chain is Low-affinity glucose transporter HXT4 (HXT4) from Saccharomyces cerevisiae (strain YJM789) (Baker's yeast).